Consider the following 256-residue polypeptide: UPF0246 protein PG_1544 (256 aa).

Belongs to the UPF0246 family.

The sequence is that of UPF0246 protein PG_1544 from Porphyromonas gingivalis (strain ATCC BAA-308 / W83).